The following is a 185-amino-acid chain: Ribosome-recycling factor (185 aa).

The tract at residues 141–161 (KQEKDKKISEDDLKRAEKEVQ) is disordered.

Belongs to the RRF family.

It is found in the cytoplasm. Functionally, responsible for the release of ribosomes from messenger RNA at the termination of protein biosynthesis. May increase the efficiency of translation by recycling ribosomes from one round of translation to another. This is Ribosome-recycling factor from Geotalea uraniireducens (strain Rf4) (Geobacter uraniireducens).